The sequence spans 444 residues: Na(+)-translocating NADH-quinone reductase subunit A (444 aa).

It belongs to the NqrA family. In terms of assembly, composed of six subunits; NqrA, NqrB, NqrC, NqrD, NqrE and NqrF.

It catalyses the reaction a ubiquinone + n Na(+)(in) + NADH + H(+) = a ubiquinol + n Na(+)(out) + NAD(+). Its function is as follows. NQR complex catalyzes the reduction of ubiquinone-1 to ubiquinol by two successive reactions, coupled with the transport of Na(+) ions from the cytoplasm to the periplasm. NqrA to NqrE are probably involved in the second step, the conversion of ubisemiquinone to ubiquinol. The polypeptide is Na(+)-translocating NADH-quinone reductase subunit A (Shewanella amazonensis (strain ATCC BAA-1098 / SB2B)).